A 292-amino-acid polypeptide reads, in one-letter code: Pantothenate synthetase (292 aa).

Position 30-37 (30-37 (MGFLHIGH)) interacts with ATP. His-37 acts as the Proton donor in catalysis. Gln-61 provides a ligand contact to (R)-pantoate. Residue Gln-61 participates in beta-alanine binding. 147–150 (GEKD) serves as a coordination point for ATP. Gln-153 is a binding site for (R)-pantoate. ATP contacts are provided by residues Val-176 and 184–187 (CSSR).

The protein belongs to the pantothenate synthetase family. In terms of assembly, homodimer.

It localises to the cytoplasm. It carries out the reaction (R)-pantoate + beta-alanine + ATP = (R)-pantothenate + AMP + diphosphate + H(+). The protein operates within cofactor biosynthesis; (R)-pantothenate biosynthesis; (R)-pantothenate from (R)-pantoate and beta-alanine: step 1/1. In terms of biological role, catalyzes the condensation of pantoate with beta-alanine in an ATP-dependent reaction via a pantoyl-adenylate intermediate. The chain is Pantothenate synthetase from Agrobacterium fabrum (strain C58 / ATCC 33970) (Agrobacterium tumefaciens (strain C58)).